The primary structure comprises 655 residues: Very long-chain specific acyl-CoA dehydrogenase, mitochondrial (655 aa).

A mitochondrion-targeting transit peptide spans 1–40 (MQSARMTPSVGRQLLRLGARSSRSAALQGQPRPTSAQRLY). Positions 1–70 (MQSARMTPSV…TREKPARAES (70 aa)) are disordered. Over residues 21–37 (SSRSAALQGQPRPTSAQ) the composition is skewed to polar residues. Positions 41-482 (ASEATQAVLE…ALQGCMDKGK (442 aa)) are catalytic. K51 carries the N6-acetyllysine modification. Positions 60 to 70 (STREKPARAES) are enriched in basic and acidic residues. Residues K71 and K127 each carry the N6-acetyllysine; alternate modification. 2 positions are modified to N6-succinyllysine; alternate: K71 and K127. K195 bears the N6-succinyllysine mark. FAD is bound at residue 214–223 (FCLTEPSSGS). The residue at position 237 (C237) is an S-nitrosocysteine. Position 239 is an N6-acetyllysine; alternate (K239). K239 is modified (N6-succinyllysine; alternate). FAD is bound at residue 249-251 (WIS). K268 is subject to N6-succinyllysine. N6-acetyllysine; alternate occurs at positions 276 and 278. An N6-succinyllysine; alternate mark is found at K276 and K278. Residues K298 and K316 each carry the N6-acetyllysine modification. Position 331 is an N6-acetyllysine; alternate (K331). The residue at position 331 (K331) is an N6-succinyllysine; alternate. K372 is subject to N6-succinyllysine. 461-463 (FEG) provides a ligand contact to substrate. The active-site Proton acceptor is the E462. Residue 464–466 (TND) coordinates FAD. K482 bears the N6-acetyllysine; alternate mark. K482 bears the N6-succinyllysine; alternate mark. The membrane-anchoring stretch occupies residues 483-516 (ELTGLGNALKNPLGNVGLLIGEASKQLRRRTGIG). Phosphoserine occurs at positions 517 and 522. An N6-acetyllysine modification is found at K550. The residue at position 556 (K556) is an N6-acetyllysine; alternate. K556 is modified (N6-succinyllysine; alternate). Q562 contributes to the FAD binding site. K639 is modified (N6-succinyllysine).

This sequence belongs to the acyl-CoA dehydrogenase family. As to quaternary structure, homodimer. Homodimerizes after import into the mitochondrion. Requires FAD as cofactor. In terms of processing, S-nitrosylation at Cys-237 in liver improves catalytic efficiency. Widely expressed (at protein level).

The protein resides in the mitochondrion inner membrane. The enzyme catalyses a very-long-chain 2,3-saturated fatty acyl-CoA + oxidized [electron-transfer flavoprotein] + H(+) = a very-long-chain (2E)-enoyl-CoA + reduced [electron-transfer flavoprotein]. It catalyses the reaction dodecanoyl-CoA + oxidized [electron-transfer flavoprotein] + H(+) = (2E)-dodecenoyl-CoA + reduced [electron-transfer flavoprotein]. The catalysed reaction is tetradecanoyl-CoA + oxidized [electron-transfer flavoprotein] + H(+) = (2E)-tetradecenoyl-CoA + reduced [electron-transfer flavoprotein]. It carries out the reaction oxidized [electron-transfer flavoprotein] + hexadecanoyl-CoA + H(+) = (2E)-hexadecenoyl-CoA + reduced [electron-transfer flavoprotein]. The enzyme catalyses octadecanoyl-CoA + oxidized [electron-transfer flavoprotein] + H(+) = (2E)-octadecenoyl-CoA + reduced [electron-transfer flavoprotein]. It catalyses the reaction eicosanoyl-CoA + oxidized [electron-transfer flavoprotein] + H(+) = (2E)-eicosenoyl-CoA + reduced [electron-transfer flavoprotein]. The catalysed reaction is docosanoyl-CoA + oxidized [electron-transfer flavoprotein] + H(+) = (2E)-docosenoyl-CoA + reduced [electron-transfer flavoprotein]. It carries out the reaction tetracosanoyl-CoA + oxidized [electron-transfer flavoprotein] + H(+) = (2E)-tetracosenoyl-CoA + reduced [electron-transfer flavoprotein]. It participates in lipid metabolism; mitochondrial fatty acid beta-oxidation. Its function is as follows. Very long-chain specific acyl-CoA dehydrogenase is one of the acyl-CoA dehydrogenases that catalyze the first step of mitochondrial fatty acid beta-oxidation, an aerobic process breaking down fatty acids into acetyl-CoA and allowing the production of energy from fats. The first step of fatty acid beta-oxidation consists in the removal of one hydrogen from C-2 and C-3 of the straight-chain fatty acyl-CoA thioester, resulting in the formation of trans-2-enoyl-CoA. Among the different mitochondrial acyl-CoA dehydrogenases, very long-chain specific acyl-CoA dehydrogenase acts specifically on acyl-CoAs with saturated 12 to 24 carbons long primary chains. The chain is Very long-chain specific acyl-CoA dehydrogenase, mitochondrial from Rattus norvegicus (Rat).